Here is a 779-residue protein sequence, read N- to C-terminus: Probable phosphoketolase 2 (779 aa).

Belongs to the XFP family. The cofactor is thiamine diphosphate.

This chain is Probable phosphoketolase 2, found in Rhizobium meliloti (strain 1021) (Ensifer meliloti).